The chain runs to 239 residues: Peptidase E (239 aa).

Residues Ser-122, Asp-137, and His-159 each act as charge relay system in the active site.

Belongs to the peptidase S51 family.

The protein resides in the cytoplasm. It carries out the reaction Dipeptidase E catalyzes the hydrolysis of dipeptides Asp-|-Xaa. It does not act on peptides with N-terminal Glu, Asn or Gln, nor does it cleave isoaspartyl peptides.. Functionally, hydrolyzes dipeptides containing N-terminal aspartate residues. May play a role in allowing the cell to use peptide aspartate to spare carbon otherwise required for the synthesis of the aspartate family of amino acids. This is Peptidase E from Shewanella baltica (strain OS195).